We begin with the raw amino-acid sequence, 228 residues long: Putative L-ribulose-5-phosphate 4-epimerase UlaF (228 aa).

Residues 26-27 (GN), 43-44 (SG), and 72-73 (SS) contribute to the substrate site. Residues D74, H93, and H95 each contribute to the Zn(2+) site. Catalysis depends on D118, which acts as the Proton donor/acceptor. Zn(2+) is bound at residue H167. Y225 acts as the Proton donor/acceptor in catalysis.

This sequence belongs to the aldolase class II family. AraD/FucA subfamily. The cofactor is Zn(2+).

It catalyses the reaction L-ribulose 5-phosphate = D-xylulose 5-phosphate. Its pathway is cofactor degradation; L-ascorbate degradation; D-xylulose 5-phosphate from L-ascorbate: step 4/4. In terms of biological role, catalyzes the isomerization of L-ribulose 5-phosphate to D-xylulose 5-phosphate. Is involved in the anaerobic L-ascorbate utilization. This Shigella boydii serotype 4 (strain Sb227) protein is Putative L-ribulose-5-phosphate 4-epimerase UlaF.